The chain runs to 199 residues: Recombination protein RecR (199 aa).

The segment at 58-73 (CSTCNNLTDKDPCTIC) adopts a C4-type zinc-finger fold. One can recognise a Toprim domain in the interval 81-176 (NLICVVQDAR…RVTRLAYGLP (96 aa)).

Belongs to the RecR family.

May play a role in DNA repair. It seems to be involved in an RecBC-independent recombinational process of DNA repair. It may act with RecF and RecO. The polypeptide is Recombination protein RecR (Natranaerobius thermophilus (strain ATCC BAA-1301 / DSM 18059 / JW/NM-WN-LF)).